The primary structure comprises 278 residues: tRNA (guanine-N(7)-)-methyltransferase (278 aa).

The segment at 1-42 (MRHDGPMHVQPGVGLQSDTSSSTGTGSGPADEPEAEKSAWGY) is disordered. S-adenosyl-L-methionine contacts are provided by glutamate 106, glutamate 131, asparagine 160, and aspartate 183. Aspartate 183 is a catalytic residue. Residues lysine 187, aspartate 219, and 256-259 (TKYE) each bind substrate.

Belongs to the class I-like SAM-binding methyltransferase superfamily. TrmB family.

The catalysed reaction is guanosine(46) in tRNA + S-adenosyl-L-methionine = N(7)-methylguanosine(46) in tRNA + S-adenosyl-L-homocysteine. It functions in the pathway tRNA modification; N(7)-methylguanine-tRNA biosynthesis. Catalyzes the formation of N(7)-methylguanine at position 46 (m7G46) in tRNA. This is tRNA (guanine-N(7)-)-methyltransferase from Mycobacterium ulcerans (strain Agy99).